Here is a 3142-residue protein sequence, read N- to C-terminus: Huntingtin (3142 aa).

The sufficient for interaction with TPR stretch occupies residues 3 to 13; it reads TLEKLMKAFES. At Lys-9 the chain carries N6-acetyllysine. The disordered stretch occupies residues 14–85; it reads LKSFQQQQQQ…PGPAVAEEPL (72 aa). Low complexity predominate over residues 18 to 37; sequence QQQQQQQQQQQQQQQQQQQQ. Residues 38–78 show a composition bias toward pro residues; the sequence is QPPPPPPPPPPPQLPQPPPQAQPLLPQPQPPPPPPPPPPGP. Lys-176 and Lys-234 each carry N6-acetyllysine. 3 HEAT repeats span residues 204 to 241, 246 to 283, and 316 to 360; these read PYLV…SFGN, NEIK…HSRR, and LTLR…VYEL. Lys-343 carries the N6-acetyllysine modification. A phosphoserine mark is found at Ser-411, Ser-417, Ser-419, and Ser-432. Residue Lys-442 is modified to N6-acetyllysine. The segment at 447–469 is disordered; that stretch reads EEEALEDDSESRSDVSSSALTAS. The segment at 491–502 is interaction with ZDHHC17; the sequence is GHDIITEQPRSQ. Residues 517–583 are disordered; that stretch reads LTSSATDGDE…TPSDSSEIVL (67 aa). Low complexity predominate over residues 531–545; the sequence is SHSSSQVSAVPSDPA. Polar residues predominate over residues 550 to 579; the sequence is DGTQASSPISDSSQTTTEGPDSAVTPSDSS. Gly-551 is lipidated: N-myristoyl glycine. Phosphoserine occurs at positions 640 and 643. HEAT repeat units lie at residues 802–839 and 902–940; these read FSLA…SLCS and KLQE…KLFY. The disordered stretch occupies residues 1176 to 1225; sequence PSLSPIRRKGKEKEPGEQASVPLSPKKGSEASAASRQSDTSGPVTTSKSS. Residues Ser-1179 and Ser-1199 each carry the phosphoserine; by CDK5 modification. Over residues 1207 to 1225 the composition is skewed to polar residues; it reads SAASRQSDTSGPVTTSKSS. Ser-1870 and Ser-1874 each carry phosphoserine. Residues 2330–2351 form a disordered region; the sequence is ERRTNTPKAISEEEEEVDPNTQ. The Nuclear export signal motif lies at 2395 to 2404; sequence IIISLARLPL. Residues 2633–2662 form a disordered region; it reads EEEWDEEEEEEADAPAPSSPPTSPVNSRKH. Over residues 2634 to 2645 the composition is skewed to acidic residues; sequence EEWDEEEEEEAD.

Belongs to the huntingtin family. In terms of assembly, interacts with PFN1. Interacts through its N-terminus with PRPF40A. Interacts with PQBP1. Interacts with SETD2. Interacts with SH3GLB1. Interacts with SYVN. Interacts with TPR; the interaction is inhibited by forms of Huntingtin with expanded polyglutamine stretch. Interacts with ZDHHC13 (via ANK repeats). Interacts with ZDHHC17 (via ANK repeats). Interacts with F8A1/F8A2/F8A3. Found in a complex with F8A1/F8A2/F8A3, HTT and RAB5A; mediates the recruitment of HTT by RAB5A. In terms of processing, cleaved by caspases downstream of the polyglutamine stretch. The resulting N-terminal fragments are cytotoxic and provokes apoptosis. Post-translationally, forms with expanded polyglutamine expansion are specifically ubiquitinated by SYVN1, which promotes their proteasomal degradation. Phosphorylation at Ser-1179 and Ser-1199 by CDK5 in response to DNA damage in nuclei of neurons protects neurons against polyglutamine expansion as well as DNA damage mediated toxicity. In terms of processing, myristoylated at Gly-551, following proteolytic cleavage at Asp-550. Expressed in the brain cortex (at protein level). Widely expressed with the highest level of expression in the brain (nerve fibers, varicosities, and nerve endings). In the brain, the regions where it can be mainly found are the cerebellar cortex, the neocortex, the striatum, and the hippocampal formation.

The protein localises to the cytoplasm. It localises to the nucleus. It is found in the early endosome. Its subcellular location is the cytoplasmic vesicle. The protein resides in the autophagosome. In terms of biological role, may play a role in microtubule-mediated transport or vesicle function. Functionally, promotes the formation of autophagic vesicles. This Homo sapiens (Human) protein is Huntingtin (HTT).